Here is a 473-residue protein sequence, read N- to C-terminus: Proton-coupled folate transporter (473 aa).

The span at 1 to 20 (MAAPSDPPTAATPPAPPPPA) shows a compositional bias: pro residues. The segment at 1-21 (MAAPSDPPTAATPPAPPPPAR) is disordered. Residues 1–29 (MAAPSDPPTAATPPAPPPPARRCLLAPSV) are Cytoplasmic-facing. The helical transmembrane segment at 30-48 (EPLLFLATLALGLQVPLAT) threads the bilayer. Residues 49–90 (QYLWDRLGAERGYVGPNASSPHGCGNGSGAVDPLREEVEALV) lie on the Extracellular side of the membrane. Asn65 and Asn74 each carry an N-linked (GlcNAc...) asparagine glycan. Cysteines 72 and 306 form a disulfide. Residues 91–116 (AHWNLCINLGGFFVGLFSVTLFGPWS) traverse the membrane as a helical segment. Residue Asn98 participates in pemetrexed binding. At 117-120 (DSVG) the chain is on the cytoplasmic side. A helical membrane pass occupies residues 121–143 (RRPVLVLPAVGMAVQAAVYLLVM). The Extracellular portion of the chain corresponds to 144–148 (YLRLH). The chain crosses the membrane as a helical span at residues 149 to 162 (VAYLLLGRIISGLL). Over 163–185 (GDYNLILAGCFASVADSSNQRTR) the chain is Cytoplasmic. H(+)-binding residues include Asp164 and Glu193. Residues 186–211 (TFRVAILEACLGVAGMVASVGGGQWR) form a helical membrane-spanning segment. Glu193 is a pemetrexed binding site. The Extracellular segment spans residues 212–216 (KAEGY). The helical transmembrane segment at 217–235 (INPFWLVLAASLAAALYAA) threads the bilayer. The Cytoplasmic segment spans residues 236–274 (LCLQETVKQRRAAKLLTLQHYKAVYKLYTAPEDLSSRRK). Residues 275–297 (LALYSLAFFLLVTVHFGTKDLYV) traverse the membrane as a helical segment. Residue His289 participates in H(+) binding. At 298-310 (LYELGSPLCWASD) the chain is on the extracellular side. A helical membrane pass occupies residues 311–333 (LIGYGSAASYLAYLSSLGGLRLL). A pemetrexed-binding site is contributed by Tyr323. At 334 to 339 (QLCLED) the chain is on the cytoplasmic side. The chain crosses the membrane as a helical span at residues 340–359 (TWVAEIGLISNIAGLVVISL). At 360–363 (ATTT) the chain is on the extracellular side. Residues 364–384 (PLMFTGYGIMFLSMAATPVIR) form a helical membrane-spanning segment. The Cytoplasmic segment spans residues 385–396 (AKLSKLVGETEQ). A helical membrane pass occupies residues 397-422 (GALFASVACVEGLCSLVATGVFNSLY). Pemetrexed contacts are provided by Glu407 and Ser411. At 423-430 (PSTLHFMR) the chain is on the extracellular side. The chain crosses the membrane as a helical span at residues 431 to 449 (GFPFLFGAILLLIPAAIMG). Residues 450-473 (WIEIQDSNLQYSHFSDASSSPADG) lie on the Cytoplasmic side of the membrane.

This sequence belongs to the major facilitator superfamily. SLC46A family. In terms of assembly, monomer. Widely expressed, including brain, aorta, liver, kidney, spleen, small intestine, pancreas, ovary and testis.

Its subcellular location is the cell membrane. It localises to the apical cell membrane. The protein resides in the basolateral cell membrane. The protein localises to the endosome membrane. It is found in the cytoplasm. It catalyses the reaction folate(in) + H(+)(in) = folate(out) + H(+)(out). The enzyme catalyses (6S)-5-methyl-5,6,7,8-tetrahydrofolate(in) + H(+)(in) = (6S)-5-methyl-5,6,7,8-tetrahydrofolate(out) + H(+)(out). The catalysed reaction is methotrexate(in) + H(+)(in) = methotrexate(out) + H(+)(out). It carries out the reaction pemetrexed(in) + H(+)(in) = pemetrexed(out) + H(+)(out). Functionally, proton-coupled folate symporter that mediates folate absorption using an H(+) gradient as a driving force. Involved in the intestinal absorption of folates at the brush-border membrane of the proximal jejunum, and the transport from blood to cerebrospinal fluid across the choroid plexus. Functions at acidic pH via alternate outward- and inward-open conformation states. Protonation of residues in the outward open state primes the protein for transport. Binding of folate promotes breaking of salt bridge network and subsequent closure of the extracellular gate, leading to the inward-open state and release of protons and folate. Also able to transport antifolate drugs, such as methotrexate and pemetrexed. Also acts as a lower-affinity, pH-independent heme carrier protein and constitutes the main importer of heme in the intestine. Imports heme in the retina and retinal pigment epithelium, in neurons of the hippocampus, in hepatocytes and in the renal epithelial cells. This is Proton-coupled folate transporter from Gallus gallus (Chicken).